The primary structure comprises 1049 residues: MALVTLQRSPTPSAASSSASNSELEAGSEEDRKLNLSLSESFFMVKGAALFLQQGSSPQGQRSLQHPHKHAGDLPQHLQVMINLLRCEDRIKLAVRLESAWADRVRYMVVVYSSGRQDTEENILLGVDFSSKESKSCTIGMVLRLWSDTKIHLDGDGGFSVSTAGRMHIFKPVSVQAMWSALQVLHKACEVARRHNYFPGGVALIWATYYESCISSEQSCINEWNAMQDLESTRPDSPALFVDKPTEGERTERLIKAKLRSIMMSQDLENVTSKEIRNELEKQMNCNLKELKEFIDNEMLLILGQMDKPSLIFDHLYLGSEWNASNLEELQGSGVDYILNVTREIDNFFPGLFAYHNIRVYDEETTDLLAHWNEAYHFINKAKRNHSKCLVHCKMGVSRSASTVIAYAMKEFGWPLEKAYNYVKQKRSITRPNAGFMRQLSEYEGILDASKQRHNKLWRQQTDSSLQQPVDDPAGPGDFLPETPDGTPESQLPFLDDAAQPGLGPPLPCCFRRLSDPLLPSPEDETGSLVHLEDPEREALLEEAAPPAEVHRPARQPQQGSGLCEKDVKKKLEFGSPKGRSGSLLQVEETEREEGLGAGRWGQLPTQLDQNLLNSENLNNNSKRSCPNGMEDDAIFGILNKVKPSYKSCADCMYPTASGAPEASRERCEDPNAPAICTQPAFLPHITSSPVAHLASRSRVPEKPASGPTEPPPFLPPAGSRRADTSGPGAGAALEPPASLLEPSRETPKVLPKSLLLKNSHCDKNPPSTEVVIKEESSPKKDMKPAKDLRLLFSNESEKPTTNSYLMQHQESIIQLQKAGLVRKHTKELERLKSVPADPAPPSRDGPASRLEASIPEESQDPAALHELGPLVMPSQAGSDEKSEAAPASLEGGSLKSPPPFFYRLDHTSSFSKDFLKTICYTPTSSSMSSNLTRSSSSDSIHSVRGKPGLVKQRTQEIETRLRLAGLTVSSPLKRSHSLAKLGSLTFSTEDLSSEADPSTVADSQDTTLSESSFLHEPQGTPRDPAATSKPSGKPAPENLKSPSWMSKS.

A compositionally biased stretch (polar residues) spans 1-12; it reads MALVTLQRSPTP. The disordered stretch occupies residues 1–28; sequence MALVTLQRSPTPSAASSSASNSELEAGS. Position 2 is an N-acetylalanine (alanine 2). The span at 13 to 25 shows a compositional bias: low complexity; that stretch reads SAASSSASNSELE. 2 positions are modified to phosphoserine: serine 37 and serine 57. Positions 249–304 constitute a DEK-C domain; it reads ERTERLIKAKLRSIMMSQDLENVTSKEIRNELEKQMNCNLKELKEFIDNEMLLILG. Residues 308–449 form the Tyrosine-protein phosphatase domain; sequence KPSLIFDHLY…LSEYEGILDA (142 aa). Cysteine 393 serves as the catalytic Phosphocysteine intermediate. The segment at 456-499 is disordered; sequence KLWRQQTDSSLQQPVDDPAGPGDFLPETPDGTPESQLPFLDDAA. Residues 458–468 show a composition bias toward polar residues; it reads WRQQTDSSLQQ. Serine 515 is subject to Phosphoserine. 4 disordered regions span residues 544-603, 693-787, 825-899, and 923-955; these read AAPP…RWGQ, HLAS…KPAK, HTKE…KSPP, and PTSS…KQRT. Over residues 564-573 the composition is skewed to basic and acidic residues; it reads CEKDVKKKLE. A Phosphoserine modification is found at serine 576. The span at 731–742 shows a compositional bias: low complexity; the sequence is GAALEPPASLLE. Over residues 772 to 787 the composition is skewed to basic and acidic residues; the sequence is VIKEESSPKKDMKPAK. Residue serine 897 is modified to Phosphoserine. The segment at 897-1049 is interaction with YWHAG; it reads SPPPFFYRLD…LKSPSWMSKS (153 aa). Residues 925–943 are compositionally biased toward low complexity; it reads SSSMSSNLTRSSSSDSIHS. A Phosphoserine modification is found at serine 978. A disordered region spans residues 989-1049; it reads TEDLSSEADP…LKSPSWMSKS (61 aa). Over residues 1001 to 1013 the composition is skewed to polar residues; that stretch reads VADSQDTTLSESS.

It belongs to the protein-tyrosine phosphatase family. In terms of assembly, interacts with actin and this stimulates phosphatase activity. Also interacts with LIMK1 and with the 14-3-3 proteins YWHAB, YWHAG, YWHAQ, and YWHAZ. Interaction with 14-3-3 proteins inhibits phosphatase activity and also blocks recruitment to lamellipodia and stimulation by actin. Phosphorylated. Inhibitory phosphorylation by PAK4 promotes binding to YWHAZ. Phosphorylation at Ser-978 is decreased by stimuli which promote actin reorganization and lamellipodia formation. Can be dephosphorylated and activated by PPP3CA/calcineurin A. Phosphorylation decreases immediately prior to telophase.

It localises to the cytoplasm. The protein resides in the cytoskeleton. Its subcellular location is the cell projection. The protein localises to the lamellipodium. It is found in the cleavage furrow. It localises to the midbody. It catalyses the reaction O-phospho-L-tyrosyl-[protein] + H2O = L-tyrosyl-[protein] + phosphate. The catalysed reaction is O-phospho-L-seryl-[protein] + H2O = L-seryl-[protein] + phosphate. The enzyme catalyses O-phospho-L-threonyl-[protein] + H2O = L-threonyl-[protein] + phosphate. Protein phosphatase which regulates actin filament dynamics. Dephosphorylates and activates the actin binding/depolymerizing factor cofilin, which subsequently binds to actin filaments and stimulates their disassembly. Inhibitory phosphorylation of cofilin is mediated by LIMK1, which may also be dephosphorylated and inactivated by this protein. This Homo sapiens (Human) protein is Protein phosphatase Slingshot homolog 1.